A 513-amino-acid polypeptide reads, in one-letter code: GMP synthase [glutamine-hydrolyzing] (513 aa).

Residues 9 to 198 form the Glutamine amidotransferase type-1 domain; the sequence is LILVLDFGSQ…VRRVCNCTGE (190 aa). Cys-86 serves as the catalytic Nucleophile. Active-site residues include His-172 and Glu-174. One can recognise a GMPS ATP-PPase domain in the interval 199–388; the sequence is WTMENFIEIE…LGIPEHLVWR (190 aa). Residue 226-232 participates in ATP binding; that stretch reads SGGVDSS.

As to quaternary structure, homodimer.

It catalyses the reaction XMP + L-glutamine + ATP + H2O = GMP + L-glutamate + AMP + diphosphate + 2 H(+). The protein operates within purine metabolism; GMP biosynthesis; GMP from XMP (L-Gln route): step 1/1. Functionally, catalyzes the synthesis of GMP from XMP. In Staphylococcus epidermidis (strain ATCC 35984 / DSM 28319 / BCRC 17069 / CCUG 31568 / BM 3577 / RP62A), this protein is GMP synthase [glutamine-hydrolyzing].